The sequence spans 1382 residues: MRAPAVLAPGILVLLFTLVQRSCGECKEALVKSEMNVNMKYQLPNFTAETPIQNVVLHKHHIYLGAVNYIYVLNDKDLQKVAEYKTGPVLEHPDCSPCQDCSHKANLSGAVWKDNINMALLIDIYYDDQLISCGSVQRGTCQRHVLPRSNTADIQSEVHCMYSPQADEEPGQCPDCVVSALGTKVLISEKTRFINFFVGNTINSSSHPDHSLHSISVRRLKETQDGFKFLTDQSYIDVLPEFRDSYPIKYVHAFESNHFIYFLTVQRETLDAQTFHTRVIRFCSVDSGLHSYMEMPLECILTEKRRKRSTREEVFNILQAAYVGKPGAHLAKQIGANLNDDILYGVFARSQPDSAEPMNRSAVCAFPIKYVNEFFNKIVNKNNVRCLQHFYGPNHEHCFNRTLLRNSSGCEVRSDEYRTEFTTALQRVDLFMGQFNQVLLTSISTFIKGDLTIANLGTSEGRFMQVVVSRSGSSTPHVNFRLDSHPVSPEAIVEHPLNQNGYTLVVTGKKITKIPLNGLGCEHFQSCSQCLSAPPFVQCGWCHDKCVQLEECPTGTWTQEICLPTIYEVFPTSAPLEGGTMLTICGWDFGFRRNNKFDLKKTKVLLGNESCTLTLSESTTNMLKCTVGPAVNEHFNISIIIANGRGTAQYSKFSYVDPIITSISPSYGPKTGGTLLTLNGKYLNSGNSRHISIGGETCTLKSVSDSILECYTPAQTTPTEFPIKLKIDLANREMNSFSYQEDPIVYAIHPTKSFISGGSTITAIGKNLHSVSVLRMGINVHEARRNFTVACQHRSNSEIICCTTPSLQQLSLQLPLKTKAFFMLDGIHSKYFDLIYVHNPVFKPFEKPVMISIGNENVLEIKGNDIDPEAVKGEVLKVGNKSCETIYSDSEAVLCKVPNDLLKLNNELNIEWKQAVSSTILGKVIVQPDQNFTGLIVGVISISLIVLLLLGLFLWLKRRKQIKDLGSELVRYDARVHTPHLDRLVSARSVSPTTEMVSNESVDYRATFPEDQFPNSSQNGSCRQVQYPLTDLSPMLTSGDSDISSPLLQNTVHIDLSALNPELVQAVQHVVIGPSSLIVHFNEVIGRGHFGCVYHGTLLDNDDKKIHCAVKSLNRITDIGEVSQFLTEGIIMKDFSHPNVLSLLGICLRSEGSPLVVLPYMKHGDLRNFIRNETHNPTVKDLIGFGLQVAKGMKYLASKKFVHRDLAARNCMLDEKFTVKVADFGLARDMYDKEYYSVHNKTGAKLPVKWMALESLQTQKFTTKSDVWSFGVLLWELMTRGAPPYPDVNTFDITVYLLQGRRLLQPEYCPDPLYEVMLKCWHPKAELRPSFSELVSRISAIFSTFIGEHYVHVNATYVNVKCVAPYPSLLSSQDIIDGEGDT.

Residues 1–24 form the signal peptide; that stretch reads MRAPAVLAPGILVLLFTLVQRSCG. The Extracellular segment spans residues 25-933; that stretch reads ECKEALVKSE…VIVQPDQNFT (909 aa). Residues 27–516 form the Sema domain; the sequence is KEALVKSEMN…TGKKITKIPL (490 aa). An N-linked (GlcNAc...) asparagine glycan is attached at N45. 4 disulfide bridges follow: C95–C101, C98–C160, C133–C141, and C173–C176. N106 carries N-linked (GlcNAc...) asparagine glycosylation. Residues N203 and N359 are each glycosylated (N-linked (GlcNAc...) asparagine). Disulfide bonds link C299/C364 and C386/C398. 2 N-linked (GlcNAc...) asparagine glycosylation sites follow: N400 and N406. 4 disulfide bridges follow: C521–C539, C527–C562, C530–C546, and C542–C552. IPT/TIG domains are found at residues 564–656, 658–740, and 743–837; these read PTIY…FSYV, PIIT…FSYQ, and PIVY…LIYV. O-linked (Man) threonine glycosylation is present at T583. N-linked (GlcNAc...) asparagine glycosylation is found at N608 and N636. 2 O-linked (Man) threonine glycosylation sites follow: T677 and T762. Residues N786, N880, and N931 are each glycosylated (N-linked (GlcNAc...) asparagine). A helical membrane pass occupies residues 934 to 956; that stretch reads GLIVGVISISLIVLLLLGLFLWL. The Cytoplasmic portion of the chain corresponds to 957–1382; the sequence is KRRKQIKDLG…QDIIDGEGDT (426 aa). S967 bears the Phosphoserine mark. T978 carries the phosphothreonine modification. Phosphoserine is present on residues S991, S998, and S1001. Phosphotyrosine is present on Y1004. In terms of domain architecture, Protein kinase spans 1079-1346; that stretch reads VHFNEVIGRG…RISAIFSTFI (268 aa). ATP is bound by residues 1085-1093 and K1111; that span reads IGRGHFGCV. The active-site Proton acceptor is the D1205. The interval 1213-1382 is interaction with RANBP9; sequence LDEKFTVKVA…QDIIDGEGDT (170 aa). Y1231 is subject to Phosphotyrosine. A phosphotyrosine; by autocatalysis mark is found at Y1235 and Y1236. T1290 carries the phosphothreonine modification. The segment at 1321 to 1360 is interaction with MUC20; it reads WHPKAELRPSFSELVSRISAIFSTFIGEHYVHVNATYVNV. Y1350 and Y1357 each carry phosphotyrosine; by autocatalysis. Position 1366 is a phosphotyrosine (Y1366).

Belongs to the protein kinase superfamily. Tyr protein kinase family. As to quaternary structure, heterodimer made of an alpha chain (50 kDa) and a beta chain (145 kDa) which are disulfide linked. Binds PLXNB1. Interacts when phosphorylated with downstream effectors including STAT3, PIK3R1, SRC, PCLG1, GRB2 and GAB1. Interacts with SPSB1, SPSB2 and SPSB4. Interacts with INPP5D/SHIP1. When phosphorylated at Tyr-1357, interacts with INPPL1/SHIP2. Interacts with RANBP9 and RANBP10, as well as SPSB1, SPSB2, SPSB3 and SPSB4. SPSB1 binding occurs in the presence and in the absence of HGF, however HGF treatment has a positive effect on this interaction. Interacts with MUC20; prevents interaction with GRB2 and suppresses hepatocyte growth factor-induced cell proliferation. Interacts with GRB10. Interacts with PTPN1 and PTPN2. Interacts with HSP90AA1 and HSP90AB1; the interaction suppresses MET kinase activity. Interacts with tensin TNS3. Interacts (when phosphorylated) with tensin TNS4 (via SH2 domain); the interaction increases MET protein stability by inhibiting MET endocytosis and subsequent lysosomal degradation. In terms of processing, autophosphorylated in response to ligand binding on Tyr-1235 and Tyr-1236 in the kinase domain leading to further phosphorylation of Tyr-1350 and Tyr-1357 in the C-terminal multifunctional docking site. Dephosphorylated by PTPRJ at Tyr-1350 and Tyr-1366. Dephosphorylated by PTPN1 and PTPN2. Post-translationally, ubiquitinated. Ubiquitination by CBL regulates the receptor stability and activity through proteasomal degradation. O-mannosylation of IPT/TIG domains by TMEM260 is required for protein maturation. O-mannosylated residues are composed of single mannose glycans that are not elongated or modified.

The protein localises to the membrane. It catalyses the reaction L-tyrosyl-[protein] + ATP = O-phospho-L-tyrosyl-[protein] + ADP + H(+). In its inactive state, the C-terminal tail interacts with the catalytic domain and inhibits the kinase activity. Upon ligand binding, the C-terminal tail is displaced and becomes phosphorylated, thus increasing the kinase activity. In terms of biological role, receptor tyrosine kinase that transduces signals from the extracellular matrix into the cytoplasm by binding to hepatocyte growth factor/HGF ligand. Regulates many physiological processes including proliferation, scattering, morphogenesis and survival. Ligand binding at the cell surface induces autophosphorylation of MET on its intracellular domain that provides docking sites for downstream signaling molecules. Following activation by ligand, interacts with the PI3-kinase subunit PIK3R1, PLCG1, SRC, GRB2, STAT3 or the adapter GAB1. Recruitment of these downstream effectors by MET leads to the activation of several signaling cascades including the RAS-ERK, PI3 kinase-AKT, or PLCgamma-PKC. The RAS-ERK activation is associated with the morphogenetic effects while PI3K/AKT coordinates prosurvival effects. During embryonic development, MET signaling plays a role in gastrulation, development and migration of muscles and neuronal precursors, angiogenesis and kidney formation. In adults, participates in wound healing as well as organ regeneration and tissue remodeling. Also promotes differentiation and proliferation of hematopoietic cells. The chain is Hepatocyte growth factor receptor (MET) from Mustela putorius furo (European domestic ferret).